The primary structure comprises 274 residues: Large ribosomal subunit protein uL2 (274 aa).

The segment at 222–274 is disordered; sequence GVAMNPVDHPHGGGEGRGKGHHPQSPWGQLAKGYKTRRGKKASDKLIVRRRNG. Residues 229 to 239 are compositionally biased toward basic and acidic residues; it reads DHPHGGGEGRG.

The protein belongs to the universal ribosomal protein uL2 family. In terms of assembly, part of the 50S ribosomal subunit. Forms a bridge to the 30S subunit in the 70S ribosome.

Its function is as follows. One of the primary rRNA binding proteins. Required for association of the 30S and 50S subunits to form the 70S ribosome, for tRNA binding and peptide bond formation. It has been suggested to have peptidyltransferase activity; this is somewhat controversial. Makes several contacts with the 16S rRNA in the 70S ribosome. The polypeptide is Large ribosomal subunit protein uL2 (Thermosipho melanesiensis (strain DSM 12029 / CIP 104789 / BI429)).